A 213-amino-acid chain; its full sequence is Motile sperm domain-containing protein 1 (213 aa).

An MSP domain is found at 16-143 (PVFVFPTELI…KEHLTESLFF (128 aa)). A run of 2 helical transmembrane segments spans residues 159–179 (SLLT…PTLG) and 191–211 (LSVN…MAIF). Residues 205–208 (LITM) carry the Nuclear export signal motif.

It is found in the endoplasmic reticulum membrane. It localises to the golgi apparatus membrane. Its function is as follows. Plays a role in differentiation and/or proliferation of mesenchymal stem cells. Proposed to be involved in epithelial-to-mesenchymal transition (EMT). However, another study suggests that it is not required for EMT or stem cell self-renewal and acts during later stages of differentiation. This Bos taurus (Bovine) protein is Motile sperm domain-containing protein 1 (MOSPD1).